Reading from the N-terminus, the 199-residue chain is Interleukin-11 (199 aa).

The signal sequence occupies residues 1 to 21; the sequence is MNCVCRLVLVVLSLWPDRVVA. An important for interaction with IL11RA and for the stimulation of cell proliferation region spans residues 182-190; the sequence is HLTLDWAVR.

Belongs to the IL-6 superfamily. As to quaternary structure, interacts with IL11RA to associate with IL6ST, giving rise to a multimeric signaling complex.

It localises to the secreted. Its function is as follows. Cytokine that stimulates the proliferation of hematopoietic stem cells and megakaryocyte progenitor cells and induces megakaryocyte maturation resulting in increased platelet production. Also promotes the proliferation of hepatocytes in response to liver damage. Binding to its receptor formed by IL6ST and IL11RA activates a signaling cascade that promotes cell proliferation. Signaling leads to the activation of intracellular protein kinases and the phosphorylation of STAT3. The interaction with the membrane-bound IL11RA and IL6ST stimulates 'classic signaling', whereas the binding of IL11 and soluble IL11RA to IL6ST stimulates 'trans-signaling'. The polypeptide is Interleukin-11 (Rattus norvegicus (Rat)).